A 788-amino-acid polypeptide reads, in one-letter code: Xylulose-5-phosphate phosphoketolase (788 aa).

It belongs to the XFP family. As to quaternary structure, homohexamer. Thiamine diphosphate is required as a cofactor.

It catalyses the reaction D-xylulose 5-phosphate + phosphate = acetyl phosphate + D-glyceraldehyde 3-phosphate + H2O. This Lactiplantibacillus pentosus (Lactobacillus pentosus) protein is Xylulose-5-phosphate phosphoketolase (xpkA).